Reading from the N-terminus, the 178-residue chain is Extracellular fatty acid-binding protein (178 aa).

Residues 1–20 (MRTLALSLGLALLCLLHAKA) form the signal peptide. Thr43 lines the enterobactin pocket. Residues Tyr72 and Lys104 each contribute to the 1-tetradecanoyl-sn-glycerol 3-phosphate site. Residues Cys80 and Cys173 are joined by a disulfide bond. The enterobactin site is built by Lys104, Arg123, and Arg134. 134 to 136 (RLY) serves as a coordination point for 1-tetradecanoyl-sn-glycerol 3-phosphate.

The protein belongs to the calycin superfamily. Lipocalin family. Monomer.

It is found in the secreted. Functionally, siderocalin-like lipocalin tightly binding a variety of bacterial ferric siderophores, also binds long-chain unsaturated fatty acids such as linoleic acid, oleic acid, arachidonic acid and, with a lower affinity, long chain saturated fatty acids such as steraic acid. May act as an antibacterial factor, through dual ligand specificity, both as a siderophore-sequestrating molecule and a lysophosphatidic acid (LPA) sensor. In Coturnix japonica (Japanese quail), this protein is Extracellular fatty acid-binding protein.